Reading from the N-terminus, the 2093-residue chain is Nuclear-pore anchor (2093 aa).

Coiled coils occupy residues 57-362, 439-529, 570-627, and 688-1172; these read LEQK…TDEL, MILQ…RDVQ, DING…RAEE, and QEKA…LEAK. A disordered region spans residues 1175-1198; the sequence is NSAEKNSRSGTISSGSTDSDHLED. A compositionally biased stretch (low complexity) spans 1182–1191; the sequence is RSGTISSGST. Coiled coils occupy residues 1208 to 1252 and 1293 to 1585; these read LRRT…AERA and EKCQ…LKHA. Disordered regions lie at residues 1453 to 1489, 1525 to 1555, and 1627 to 2093; these read YEKE…AVVE, KKDE…KKEK, and SNSQ…PSPP. Residues 1470-1483 show a composition bias toward basic and acidic residues; sequence QLEEAKEEAGKRTT. A compositionally biased stretch (polar residues) spans 1652-1674; that stretch reads STMTRVPSSTPLIKSPVATTQQL. Basic and acidic residues-rich tracts occupy residues 1710–1719 and 1729–1740; these read KPEESPKVDV and DEGKQPAAHEPE. Polar residues predominate over residues 1764-1779; it reads SEPQQDSLTQGETSSE. Residues 1789–1808 show a composition bias toward basic and acidic residues; that stretch reads KGSESHPDTSEGENLAKEPA. Residues 1818-1849 are a coiled coil; sequence TTDGDNEETEAENAEEKTEEYVEAQQDNEADE. Acidic residues-rich tracts occupy residues 1821–1830 and 1838–1903; these read GDNEETEAEN and YVEA…EEGT. Residues 1921 to 1931 show a composition bias toward polar residues; it reads TLATPTQSPSR. Positions 1935–1963 are enriched in acidic residues; the sequence is AMEEAETTIETPVEDDKTDEGGDAAEEAA. Residues 1984–2009 show a composition bias toward low complexity; that stretch reads TSAATTSPVSTAPTTSSTLASAITSS. At Ser-2022 the chain carries Phosphoserine.

In terms of assembly, part of the nuclear pore complex (NPC). The NPC has an eight-fold symmetrical structure comprising a central transport channel and two rings, the cytoplasmic and nuclear rings, to which eight filaments are attached. The cytoplasmic filaments have loose ends, while the nuclear filaments are joined in a distal ring, forming a nuclear basket. NPCs are highly dynamic in configuration and composition, and can be devided in 3 subcomplexes, the NUP62 subcomplex, the NUP107-160 subcomplex and the NUP93 subcomplex, containing approximately 30 different nucleoporin proteins. Interacts with MAD1 and (via N-terminus) with ESD4. As to expression, ubiquitous. Highest expression in the shoot apical region.

The protein resides in the nucleus envelope. It is found in the nucleus membrane. It localises to the nucleus. The protein localises to the nuclear pore complex. In terms of biological role, component of the nuclear pore complex. Acts as a docking site for activities required for desumoylation and mRNA export. Required for the proper expression or localization of a subset of miRNAs. Plays a role in meristematic cell division by interacting with spindle assembly checkpoint proteins. In Arabidopsis thaliana (Mouse-ear cress), this protein is Nuclear-pore anchor.